Here is a 145-residue protein sequence, read N- to C-terminus: Bacilliredoxin SSP1241 (145 aa).

The protein belongs to the bacilliredoxin family.

The sequence is that of Bacilliredoxin SSP1241 from Staphylococcus saprophyticus subsp. saprophyticus (strain ATCC 15305 / DSM 20229 / NCIMB 8711 / NCTC 7292 / S-41).